Consider the following 225-residue polypeptide: Germin-like protein 8-6 (225 aa).

The first 23 residues, 1–23 (MASPSSLCLLTALLALVSWQTIA), serve as a signal peptide directing secretion. Cys33 and Cys48 form a disulfide bridge. The Cupin type-1 domain maps to 63–213 (AMLDTPRKTN…AFQVEKGTID (151 aa)). Asn77 carries an N-linked (GlcNAc...) asparagine glycan. Residues His110, His112, and Glu117 each coordinate Mn(2+). Asn136 carries N-linked (GlcNAc...) asparagine glycosylation. His158 provides a ligand contact to Mn(2+).

Belongs to the germin family. Oligomer (believed to be a pentamer but probably hexamer).

Its subcellular location is the secreted. The protein localises to the extracellular space. The protein resides in the apoplast. In terms of biological role, plays a role in broad-spectrum disease resistance. Probably has no oxalate oxidase activity even if the active site is conserved. This chain is Germin-like protein 8-6, found in Oryza sativa subsp. japonica (Rice).